The following is a 43-amino-acid chain: uncharacterized protein (43 aa).

Residues 1-43 (MFKSRIETGGFQFQVHGDDESAMDDEFIDDDDDQQVVEPVTDN) form a disordered region. A compositionally biased stretch (acidic residues) spans 20–35 (ESAMDDEFIDDDDDQQ).

This is an uncharacterized protein from Dictyostelium discoideum (Social amoeba).